A 318-amino-acid polypeptide reads, in one-letter code: Thymidylate synthase (318 aa).

DUMP is bound by residues Arg25 and 180-181 (RR). Residue Cys200 is the Nucleophile of the active site. DUMP contacts are provided by residues 220–223 (RSAD), Asn231, and 261–263 (HIY). Residue Asp223 coordinates (6R)-5,10-methylene-5,6,7,8-tetrahydrofolate. Ala317 provides a ligand contact to (6R)-5,10-methylene-5,6,7,8-tetrahydrofolate.

The protein belongs to the thymidylate synthase family. Bacterial-type ThyA subfamily. In terms of assembly, homodimer.

It is found in the cytoplasm. It carries out the reaction dUMP + (6R)-5,10-methylene-5,6,7,8-tetrahydrofolate = 7,8-dihydrofolate + dTMP. It participates in pyrimidine metabolism; dTTP biosynthesis. Catalyzes the reductive methylation of 2'-deoxyuridine-5'-monophosphate (dUMP) to 2'-deoxythymidine-5'-monophosphate (dTMP) while utilizing 5,10-methylenetetrahydrofolate (mTHF) as the methyl donor and reductant in the reaction, yielding dihydrofolate (DHF) as a by-product. This enzymatic reaction provides an intracellular de novo source of dTMP, an essential precursor for DNA biosynthesis. The chain is Thymidylate synthase from Ligilactobacillus salivarius (strain UCC118) (Lactobacillus salivarius).